We begin with the raw amino-acid sequence, 566 residues long: ATP-dependent RNA helicase DBP3 (566 aa).

A disordered region spans residues 1–139 (MSAGKKHARD…TTPNGSAQRN (139 aa)). Residues 39 to 58 (DKKKKDKKDKKERKEKKEKK) show a composition bias toward basic residues. The segment covering 81–91 (SEPKPEKEKKE) has biased composition (basic and acidic residues). Positions 92-102 (KNNKKDKKDKK) are enriched in basic residues. The span at 127–139 (AATTTPNGSAQRN) shows a compositional bias: polar residues. The short motif at 182–209 (IHFSHLPTSTLTSKKPFASFTAPTPIQA) is the Q motif element. One can recognise a Helicase ATP-binding domain in the interval 212-396 (WPFALSGRDV…EGFMIDPVKA (185 aa)). 225–232 (AETGSGKT) lines the ATP pocket. The DEAD box motif lies at 342–345 (DEAD). The 134-residue stretch at 433-566 (GKEQRLLELL…TEHDKSHSGS (134 aa)) folds into the Helicase C-terminal domain.

Belongs to the DEAD box helicase family. DDX5/DBP2 subfamily.

The protein resides in the nucleus. It localises to the nucleolus. The catalysed reaction is ATP + H2O = ADP + phosphate + H(+). In terms of biological role, ATP-dependent RNA helicase required for 60S ribosomal subunit synthesis. Involved in efficient pre-rRNA processing, predominantly at site A3, which is necessary for the normal formation of 25S and 5.8S rRNAs. The protein is ATP-dependent RNA helicase DBP3 (DBP3) of Chaetomium globosum (strain ATCC 6205 / CBS 148.51 / DSM 1962 / NBRC 6347 / NRRL 1970) (Soil fungus).